The sequence spans 228 residues: 2,3-bisphosphoglycerate-dependent phosphoglycerate mutase (228 aa).

Residues 8-15 (RHGQSEWN), 21-22 (TG), R60, 87-90 (ERHY), K98, 114-115 (RR), and 183-184 (GN) each bind substrate. The Tele-phosphohistidine intermediate role is filled by H9. E87 acts as the Proton donor/acceptor in catalysis.

This sequence belongs to the phosphoglycerate mutase family. BPG-dependent PGAM subfamily.

It carries out the reaction (2R)-2-phosphoglycerate = (2R)-3-phosphoglycerate. It functions in the pathway carbohydrate degradation; glycolysis; pyruvate from D-glyceraldehyde 3-phosphate: step 3/5. Functionally, catalyzes the interconversion of 2-phosphoglycerate and 3-phosphoglycerate. The chain is 2,3-bisphosphoglycerate-dependent phosphoglycerate mutase from Staphylococcus aureus (strain Mu3 / ATCC 700698).